An 818-amino-acid polypeptide reads, in one-letter code: Glycerol-3-phosphate acyltransferase (818 aa).

The HXXXXD motif motif lies at 305-310 (CHRSHM).

It belongs to the GPAT/DAPAT family.

The protein resides in the cell inner membrane. The enzyme catalyses sn-glycerol 3-phosphate + an acyl-CoA = a 1-acyl-sn-glycero-3-phosphate + CoA. Its pathway is phospholipid metabolism; CDP-diacylglycerol biosynthesis; CDP-diacylglycerol from sn-glycerol 3-phosphate: step 1/3. The chain is Glycerol-3-phosphate acyltransferase from Edwardsiella ictaluri (strain 93-146).